A 227-amino-acid polypeptide reads, in one-letter code: PKHD-type hydroxylase azo0608 (227 aa).

Residues 78–178 form the Fe2OG dioxygenase domain; the sequence is RVLTPFFNRY…RVACFMFMQS (101 aa). Fe cation is bound by residues histidine 97, aspartate 99, and histidine 159. 2-oxoglutarate is bound at residue arginine 169.

The cofactor is Fe(2+). It depends on L-ascorbate as a cofactor.

The protein is PKHD-type hydroxylase azo0608 of Azoarcus sp. (strain BH72).